We begin with the raw amino-acid sequence, 579 residues long: Solute carrier family 15 member 5 (579 aa).

Helical transmembrane passes span 77-97, 110-130, 154-174, 191-211, 221-241, 304-324, 343-363, 386-406, 422-442, 472-492, and 509-529; these read CQAA…PVFV, LVYI…VVAF, LFYV…AIVC, SFFN…FLGI, ALVL…LHMI, TFFL…MCIM, GFLL…LILA, CIIA…FFEI, VLTV…LLGV, TLFN…VYLI, and SFFF…CSVS.

This sequence belongs to the major facilitator superfamily. Proton-dependent oligopeptide transporter (POT/PTR) (TC 2.A.17) family.

The protein resides in the membrane. Proton oligopeptide cotransporter. This is Solute carrier family 15 member 5 (SLC15A5) from Homo sapiens (Human).